Here is a 260-residue protein sequence, read N- to C-terminus: Putative ATP-binding protein BAB2_1147 (260 aa).

An ABC transporter domain is found at 5–228 (ISFNNVVMRY…DLPYPRTEAI (224 aa)). 37 to 44 (GPSGCGKS) is an ATP binding site.

It belongs to the ABC transporter superfamily. In terms of assembly, the complex is composed of two ATP-binding proteins (BAB2_1147), two transmembrane proteins (BAB2_1148) and a solute-binding protein (BAB2_1146).

Its subcellular location is the cell inner membrane. Its function is as follows. Probably part of an ABC transporter complex. Probably Responsible for energy coupling to the transport system. In Brucella abortus (strain 2308), this protein is Putative ATP-binding protein BAB2_1147.